A 58-amino-acid chain; its full sequence is UPF0391 membrane protein ABO_0024 (58 aa).

The next 2 helical transmembrane spans lie at 4-24 and 28-48; these read WALT…GGIA and ASIA…SLVV.

The protein belongs to the UPF0391 family.

It is found in the cell membrane. This Alcanivorax borkumensis (strain ATCC 700651 / DSM 11573 / NCIMB 13689 / SK2) protein is UPF0391 membrane protein ABO_0024.